A 322-amino-acid chain; its full sequence is Ribonuclease Z (322 aa).

The Zn(2+) site is built by H62, H64, D66, H67, H143, D215, and H273. D66 acts as the Proton acceptor in catalysis. A compositionally biased stretch (basic and acidic residues) spans E300–D314. The interval E300–S322 is disordered.

This sequence belongs to the RNase Z family. In terms of assembly, homodimer. It depends on Zn(2+) as a cofactor.

The enzyme catalyses Endonucleolytic cleavage of RNA, removing extra 3' nucleotides from tRNA precursor, generating 3' termini of tRNAs. A 3'-hydroxy group is left at the tRNA terminus and a 5'-phosphoryl group is left at the trailer molecule.. Its function is as follows. Zinc phosphodiesterase, which displays some tRNA 3'-processing endonuclease activity. Probably involved in tRNA maturation, by removing a 3'-trailer from precursor tRNA. The polypeptide is Ribonuclease Z (Salinibacter ruber (strain DSM 13855 / M31)).